Consider the following 299-residue polypeptide: Elongation factor Ts, mitochondrial (299 aa).

The transit peptide at 1 to 18 directs the protein to the mitochondrion; sequence MLFQRRLHFHQFFGKTRV.

The protein belongs to the EF-Ts family.

It is found in the mitochondrion. Associates with the EF-Tu.GDP complex and induces the exchange of GDP to GTP. It remains bound to the aminoacyl-tRNA.EF-Tu.GTP complex up to the GTP hydrolysis stage on the ribosome. In Schizosaccharomyces pombe (strain 972 / ATCC 24843) (Fission yeast), this protein is Elongation factor Ts, mitochondrial (tsf1).